A 913-amino-acid polypeptide reads, in one-letter code: Protein translocase subunit SecA (913 aa).

ATP is bound by residues Q87, 105–109 (GEGKT), and D512. Zn(2+) contacts are provided by C897, C899, C908, and H909.

It belongs to the SecA family. As to quaternary structure, monomer and homodimer. Part of the essential Sec protein translocation apparatus which comprises SecA, SecYEG and auxiliary proteins SecDF-YajC and YidC. The cofactor is Zn(2+).

Its subcellular location is the cell inner membrane. The protein resides in the cytoplasm. The enzyme catalyses ATP + H2O + cellular proteinSide 1 = ADP + phosphate + cellular proteinSide 2.. Its function is as follows. Part of the Sec protein translocase complex. Interacts with the SecYEG preprotein conducting channel. Has a central role in coupling the hydrolysis of ATP to the transfer of proteins into and across the cell membrane, serving both as a receptor for the preprotein-SecB complex and as an ATP-driven molecular motor driving the stepwise translocation of polypeptide chains across the membrane. The chain is Protein translocase subunit SecA from Pseudomonas syringae pv. syringae (strain B728a).